The sequence spans 287 residues: Nucleotide-binding protein VIBHAR_03667 (287 aa).

Residue glycine 8–serine 15 coordinates ATP. Aspartate 56–asparagine 59 provides a ligand contact to GTP.

This sequence belongs to the RapZ-like family.

Its function is as follows. Displays ATPase and GTPase activities. This chain is Nucleotide-binding protein VIBHAR_03667, found in Vibrio campbellii (strain ATCC BAA-1116).